We begin with the raw amino-acid sequence, 74 residues long: ATP synthase subunit 9, mitochondrial (74 aa).

2 consecutive transmembrane segments (helical) span residues 8–28 (MGAG…GNVF) and 50–70 (ILGF…AFLI).

Belongs to the ATPase C chain family. F-type ATPases have 2 components, CF(1) - the catalytic core - and CF(0) - the membrane proton channel. CF(1) has five subunits: alpha(3), beta(3), gamma(1), delta(1), epsilon(1). CF(0) has three main subunits: a, b and c.

The protein localises to the mitochondrion membrane. This protein is one of the chains of the nonenzymatic membrane component (F0) of mitochondrial ATPase. The chain is ATP synthase subunit 9, mitochondrial (ATP9) from Solanum tuberosum (Potato).